The chain runs to 435 residues: Flavonol 7-O-rhamnosyltransferase (435 aa).

Glutamine 18 is a UDP binding site. Glutamine 18 provides a ligand contact to UDP-beta-L-rhamnose. Histidine 21 serves as the catalytic Proton acceptor. A quercetin-binding site is contributed by histidine 21. Aspartate 119 acts as the Charge relay in catalysis. UDP is bound by residues serine 250, alanine 315, histidine 332, glycine 336, serine 337, and glutamate 340. UDP-beta-L-rhamnose contacts are provided by serine 250, alanine 315, histidine 332, glycine 336, serine 337, and glutamate 340.

The protein belongs to the UDP-glycosyltransferase family. Highly expressed in floral buds. Expressed in stems, leaves and flowers. Expressed at low levels in roots and siliques. Expressed on the adaxial side of cotyledons and emerging leaves, in trichomes, root columella cells, and the late elongation/early differentiation zone of roots.

The catalysed reaction is quercitrin + UDP-beta-L-rhamnose = quercetin 3,7-bis-O-alpha-L-rhamnoside + UDP + H(+). The enzyme catalyses quercetin 3-O-beta-D-glucoside + UDP-beta-L-rhamnose = quercetin 3-O-beta-D-glucoside-7-O-alpha-L-rhamnoside + UDP + H(+). Its pathway is flavonoid metabolism. Its function is as follows. Flavonol 7-O-rhamnosyltransferase that catalyzes the transfer of rhamnose from UDP-rhamnose to the 7-OH position of 3-O-glycosylated flavonols, such as kaempferol 3-O-rhamnoside, kaempferol 3-O-glucoside, quercetin 3-O-glucoside, quercetin 3-O-galactoside, quercetin 3-O-rhamnoside and isorhamnetin 3-O-glucoside. Is able to glycosylate the flavonols quercetin and kaempferol to yield quercetin 7-O-rhamnoside and kaempferol 7-O-rhamnoside. Shows a strict specificity for UDP-rhamnose as sugar donor. Does not act on 3-O-glycosylated anthocyanins. The accumulation of kaempferol 3-O-rhamnoside-7-O-rhamnoside inhibits basipetal auxin transport, which influences auxin distribution and plant organ development. This is Flavonol 7-O-rhamnosyltransferase from Arabidopsis thaliana (Mouse-ear cress).